Consider the following 280-residue polypeptide: Four and a half LIM domains protein 1 (280 aa).

At Ser-2 the chain carries N-acetylserine. Lys-4 bears the N6-acetyllysine mark. The C4-type zinc-finger motif lies at Cys-7–Cys-31. LIM zinc-binding domains lie at Cys-40–Cys-92, Cys-101–Cys-153, Cys-162–Cys-212, and Cys-221–Cys-276. Residue Lys-86 forms a Glycyl lysine isopeptide (Lys-Gly) (interchain with G-Cter in SUMO2) linkage.

Its subcellular location is the cytoplasm. Its function is as follows. May have an involvement in muscle development or hypertrophy. Isoform 2 binds to RBP-J and plays a negative regulatory role in the RBP-J-mediated transcription in mammalian systems. This chain is Four and a half LIM domains protein 1 (Fhl1), found in Rattus norvegicus (Rat).